Here is a 436-residue protein sequence, read N- to C-terminus: Putative F-box/FBD/LRR-repeat protein At5g44960 (436 aa).

The F-box domain occupies 4-50; that stretch reads CDYINELPDSLLTQILLDLRTKDSVKTSVSSKRWRNLWLNVPGLDLF. LRR repeat units lie at residues 287 to 310 and 397 to 420; these read ISSV…SKLG and SAVL…SYKK. The 53-residue stretch at 355–407 folds into the FBD domain; it reads EENIDFHEVPQCLISTLEYVHINKLMMMEQSGIKLVNYFIENSAVLKKLTLRF.

The chain is Putative F-box/FBD/LRR-repeat protein At5g44960 from Arabidopsis thaliana (Mouse-ear cress).